The sequence spans 261 residues: Kallikrein-1 (261 aa).

An N-terminal signal peptide occupies residues 1–18; sequence MWFLILFLALSLGRNDAA. The propeptide at 19-24 is activation peptide; it reads PPVQSR. A Peptidase S1 domain is found at 25 to 258; the sequence is VVGGYNCEMN…FTPWIKEVMK (234 aa). 5 disulfide bridges follow: Cys-31/Cys-173, Cys-50/Cys-66, Cys-152/Cys-219, Cys-184/Cys-198, and Cys-209/Cys-234. The Charge relay system role is filled by His-65. N-linked (GlcNAc...) asparagine glycosylation occurs at Asn-108. Asp-120 acts as the Charge relay system in catalysis. Ser-213 (charge relay system) is an active-site residue.

Belongs to the peptidase S1 family. Kallikrein subfamily. As to expression, high levels in pancreas, submaxillary and parotid glands, spleen, and kidney.

The catalysed reaction is Preferential cleavage of Arg-|-Xaa bonds in small molecule substrates. Highly selective action to release kallidin (lysyl-bradykinin) from kininogen involves hydrolysis of Met-|-Xaa or Leu-|-Xaa.. The polypeptide is Kallikrein-1 (Ngfg) (Rattus norvegicus (Rat)).